The following is a 304-amino-acid chain: MKCTKCGKPASVKLRHYNIKLCKEHFNEFIEQRVEKAIKKFKMFGRNSKILIAVSGGKDSVSLWHMLKKLGYEVDALFIRAGKSGMVQKAQEIVEKNAELLNTKLHIVDATEYFGGLSTQEISIMLRRPVCSICGVVRRYLMNKFAYENGYDVVVTGHNLNDEASVLLGNILHWQEGYLERQWPLLPKTHEKLVPKAKPLVLNYEEDIKLYATLNEIPHLEMACPFSVGATSLVYKKILRELEEEQPGITLNFYLGFLKRKKEPKFEVEGLRECKECGYPTTAEVCSFCRLRKQVEKRKNKTPA.

Residues C3, C6, C22, and H25 each contribute to the Zn(2+) site. Residues A53 and I79 each coordinate ATP. Residues C131 and C134 each contribute to the [4Fe-4S] cluster site. ATP is bound by residues R138 and G157. C224 is a [4Fe-4S] cluster binding site. Residues C274, C277, C286, and C289 each coordinate Zn(2+).

The protein belongs to the TtcA family. TtuA subfamily. As to quaternary structure, homodimer. It depends on [4Fe-4S] cluster as a cofactor. Requires Mg(2+) as cofactor.

It catalyses the reaction 5-methyluridine(54) in tRNA + hydrogen sulfide + ATP = 5-methyl-2-thiouridine(54) in tRNA + AMP + diphosphate. Its pathway is tRNA modification. Its function is as follows. Catalyzes the ATP-dependent 2-thiolation of 5-methyluridine residue at position 54 in the T loop of tRNAs, leading to 5-methyl-2-thiouridine (m(5)s(2)U or s(2)T). This modification allows thermal stabilization of tRNAs in thermophilic microorganisms, and is required for cell growth at high temperatures. Can use free sulfide as sulfur source in vitro. The protein is tRNA-5-methyluridine(54) 2-sulfurtransferase of Thermotoga maritima (strain ATCC 43589 / DSM 3109 / JCM 10099 / NBRC 100826 / MSB8).